The following is a 231-amino-acid chain: Adenosylcobinamide-GDP ribazoletransferase (231 aa).

6 helical membrane passes run 24–44 (LWAF…ILYL), 46–66 (LPLS…LLHL), 96–116 (IAGL…LQLL), 159–176 (LALG…VVLF), 181–198 (LAGI…RISL), and 209–229 (LGAT…LVWW).

Belongs to the CobS family. Requires Mg(2+) as cofactor.

Its subcellular location is the cell membrane. It carries out the reaction alpha-ribazole + adenosylcob(III)inamide-GDP = adenosylcob(III)alamin + GMP + H(+). The enzyme catalyses alpha-ribazole 5'-phosphate + adenosylcob(III)inamide-GDP = adenosylcob(III)alamin 5'-phosphate + GMP + H(+). Its pathway is cofactor biosynthesis; adenosylcobalamin biosynthesis; adenosylcobalamin from cob(II)yrinate a,c-diamide: step 7/7. Its function is as follows. Joins adenosylcobinamide-GDP and alpha-ribazole to generate adenosylcobalamin (Ado-cobalamin). Also synthesizes adenosylcobalamin 5'-phosphate from adenosylcobinamide-GDP and alpha-ribazole 5'-phosphate. The protein is Adenosylcobinamide-GDP ribazoletransferase of Thermococcus kodakarensis (strain ATCC BAA-918 / JCM 12380 / KOD1) (Pyrococcus kodakaraensis (strain KOD1)).